The primary structure comprises 382 residues: Pyrimidine monooxygenase RutA (382 aa).

FMN-binding positions include 68–69 (IK), Asn134, Glu143, 159–160 (RY), and Ser209.

This sequence belongs to the NtaA/SnaA/DszA monooxygenase family. RutA subfamily.

The catalysed reaction is uracil + FMNH2 + NADH + O2 = (Z)-3-ureidoacrylate + FMN + NAD(+) + H2O + H(+). The enzyme catalyses thymine + FMNH2 + NADH + O2 = (Z)-2-methylureidoacrylate + FMN + NAD(+) + H2O + H(+). Functionally, catalyzes the pyrimidine ring opening between N-3 and C-4 by an unusual flavin hydroperoxide-catalyzed mechanism, adding oxygen atoms in the process to yield ureidoacrylate peracid, that immediately reacts with FMN forming ureidoacrylate and FMN-N(5)-oxide. The FMN-N(5)-oxide reacts spontaneously with NADH to produce FMN. Requires the flavin reductase RutF to regenerate FMN in vivo. The sequence is that of Pyrimidine monooxygenase RutA from Escherichia coli (strain SE11).